Reading from the N-terminus, the 71-residue chain is Conotoxin ba5b (71 aa).

An N-terminal signal peptide occupies residues 1-19 (MLCLPVFITLLLLVSPSAA). A propeptide spanning residues 20–52 (LPVESELQRDLTQDSPKDFRIREPLLLSKMFDR) is cleaved from the precursor. 2 disulfides stabilise this stretch: cysteine 54-cysteine 63 and cysteine 55-cysteine 64. At cysteine 64 the chain carries Cysteine amide. A propeptide spanning residues 66 to 71 (RYQRGS) is cleaved from the precursor.

Belongs to the conotoxin T superfamily. In terms of tissue distribution, expressed by the venom duct.

Its subcellular location is the secreted. The sequence is that of Conotoxin ba5b from Conus bayani (Bayan's cone).